A 79-amino-acid polypeptide reads, in one-letter code: Major outer membrane lipoprotein Lpp 2 (79 aa).

The signal sequence occupies residues 1–21 (MNRTNKLILGAVVLGSTLLAG). A lipid anchor (N-palmitoyl cysteine) is attached at Cys22. Residue Cys22 is the site of S-diacylglycerol cysteine attachment. 2 repeats span residues 25 to 35 (NAKIDQLSSDV) and 39 to 49 (SAKVDQLSNDV). Positions 28–69 (IDQLSSDVQTLSAKVDQLSNDVNAMRSDVQAAKDDAARANQR) form a coiled coil. An N6-murein peptidoglycan lysine modification is found at Lys79.

It belongs to the Lpp family. In terms of assembly, homotrimer.

The protein resides in the cell outer membrane. It localises to the secreted. Its subcellular location is the cell wall. In terms of biological role, a highly abundant outer membrane lipoprotein that controls the distance between the inner and outer membranes. The only protein known to be covalently linked to the peptidoglycan network (PGN). Also non-covalently binds the PGN. The link between the cell outer membrane and PGN contributes to maintenance of the structural and functional integrity of the cell envelope, and maintains the correct distance between the PGN and the outer membrane. This Salmonella typhi protein is Major outer membrane lipoprotein Lpp 2.